A 682-amino-acid chain; its full sequence is Potassium-transporting ATPase ATP-binding subunit (682 aa).

The next 4 helical transmembrane spans lie at 34-54 (PVMFVVWAGSVLTTLLTLAMV), 58-78 (IAGSALFTGIISLWLWFTVLF), 219-239 (IALTILLIALTIVFLLATATL), and 254-274 (VLVALLVCLIPTTIGGLLSAI). The active-site 4-aspartylphosphate intermediate is D307. Residues D344, E348, 377-384 (FTAQSRMS), and K395 each bind ATP. 2 residues coordinate Mg(2+): D518 and D522. A run of 3 helical transmembrane segments spans residues 588 to 608 (FAIIPAAFAATYPQLNALNVM), 616 to 636 (AILSAVIFNALIIIFLIPLAL), and 662 to 682 (LVVPFIGIKVIDVLLTLLGLA).

The protein belongs to the cation transport ATPase (P-type) (TC 3.A.3) family. Type IA subfamily. In terms of assembly, the system is composed of three essential subunits: KdpA, KdpB and KdpC.

The protein localises to the cell inner membrane. It carries out the reaction K(+)(out) + ATP + H2O = K(+)(in) + ADP + phosphate + H(+). Functionally, part of the high-affinity ATP-driven potassium transport (or Kdp) system, which catalyzes the hydrolysis of ATP coupled with the electrogenic transport of potassium into the cytoplasm. This subunit is responsible for energy coupling to the transport system and for the release of the potassium ions to the cytoplasm. This chain is Potassium-transporting ATPase ATP-binding subunit, found in Salmonella newport (strain SL254).